Reading from the N-terminus, the 273-residue chain is Large ribosomal subunit protein uL2 (273 aa).

2 disordered regions span residues 31–50 (APLL…GRIT) and 221–273 (RGTA…RRGK). The segment covering 253–273 (KGKKTRHNKRTDKYIVRRRGK) has biased composition (basic residues).

It belongs to the universal ribosomal protein uL2 family. Part of the 50S ribosomal subunit. Forms a bridge to the 30S subunit in the 70S ribosome.

In terms of biological role, one of the primary rRNA binding proteins. Required for association of the 30S and 50S subunits to form the 70S ribosome, for tRNA binding and peptide bond formation. It has been suggested to have peptidyltransferase activity; this is somewhat controversial. Makes several contacts with the 16S rRNA in the 70S ribosome. This is Large ribosomal subunit protein uL2 from Actinobacillus pleuropneumoniae serotype 7 (strain AP76).